Reading from the N-terminus, the 509-residue chain is Kynureninase 1 (509 aa).

Pyridoxal 5'-phosphate-binding positions include leucine 169, threonine 170, 197–200 (FPSD), aspartate 283, histidine 286, and tyrosine 308. N6-(pyridoxal phosphate)lysine is present on lysine 309. Pyridoxal 5'-phosphate contacts are provided by tryptophan 349 and asparagine 377.

Belongs to the kynureninase family. In terms of assembly, homodimer. The cofactor is pyridoxal 5'-phosphate.

It is found in the cytoplasm. It catalyses the reaction L-kynurenine + H2O = anthranilate + L-alanine + H(+). The enzyme catalyses 3-hydroxy-L-kynurenine + H2O = 3-hydroxyanthranilate + L-alanine + H(+). Its pathway is amino-acid degradation; L-kynurenine degradation; L-alanine and anthranilate from L-kynurenine: step 1/1. The protein operates within cofactor biosynthesis; NAD(+) biosynthesis; quinolinate from L-kynurenine: step 2/3. Catalyzes the cleavage of L-kynurenine (L-Kyn) and L-3-hydroxykynurenine (L-3OHKyn) into anthranilic acid (AA) and 3-hydroxyanthranilic acid (3-OHAA), respectively. This is Kynureninase 1 (bna5-1) from Aspergillus fumigatus (strain CBS 144.89 / FGSC A1163 / CEA10) (Neosartorya fumigata).